A 353-amino-acid polypeptide reads, in one-letter code: MKKTAIALAVALVGFATVAQAAPKDNTWYTGGKLGWSQYQDTGSIINNDGPTHKDQLGAGAFFGYQANQYLGFEMGYDWLGRMPYKGDINNGAFKAQGVQLAAKLSYPVAQDLDVYTRLGGLVWRADAKGSFDGGLDRASGHDTGVSPLVALGAEYAWTKNWATRMEYQWVNNIGDRETVGARPDNGLLSVGVSYRFGQEDAAAPIVAPTPAPAPIVDTKRFTLKSDVLFGFNKANLKPEGQQALDQLYAQLSSIDPKDGSVVVLGFADRIGQPAPNLALSQRRADSVRDYLVSKGIPADKITARGEGQANPVTGNTCDNVKPRAALIECLAPDRRVEIEVKGYKEVVTQPQA.

The first 21 residues, 1-21 (MKKTAIALAVALVGFATVAQA), serve as a signal peptide directing secretion. 8 beta stranded membrane-spanning segments follow: residues 27 to 37 (TWYTGGKLGWS), 56 to 67 (QLGAGAFFGYQA), 71 to 79 (LGFEMGYDW), 97 to 108 (QGVQLAAKLSYP), 113 to 121 (LDVYTRLGG), 148 to 157 (PLVALGAEYA), 162 to 169 (WATRMEYQ), and 188 to 196 (LLSVGVSYR). Tandem repeats lie at residues 208–209 (AP), 210–211 (TP), 212–213 (AP), and 214–215 (AP). A 4 X 2 AA approximate tandem repeats of A-P region spans residues 208-215 (APTPAPAP). An OmpA-like domain is found at 217-345 (VDTKRFTLKS…RVEIEVKGYK (129 aa)). A disulfide bond links cysteine 318 and cysteine 330.

It belongs to the outer membrane OOP (TC 1.B.6) superfamily. OmpA family. Monomer and homodimer.

It is found in the cell outer membrane. Functionally, with TolR probably plays a role in maintaining the position of the peptidoglycan cell wall in the periplasm. Acts as a porin with low permeability that allows slow penetration of small solutes; an internal gate slows down solute passage. This chain is Outer membrane protein A, found in Yersinia pseudotuberculosis serotype I (strain IP32953).